A 436-amino-acid chain; its full sequence is GTPase Der (436 aa).

EngA-type G domains lie at 4-167 (PTIA…PNEY) and 175-351 (IKFS…ESQN). GTP is bound by residues 10 to 17 (GRPNVGKS), 57 to 61 (DTGGI), 119 to 122 (NKVD), 181 to 188 (GRPNVGKS), 229 to 233 (DTAGM), and 294 to 297 (NKWD). The KH-like domain maps to 352–436 (TRIPSAVLND…PIHLIARKRK (85 aa)).

It belongs to the TRAFAC class TrmE-Era-EngA-EngB-Septin-like GTPase superfamily. EngA (Der) GTPase family. Associates with the 50S ribosomal subunit.

Its function is as follows. GTPase that plays an essential role in the late steps of ribosome biogenesis. This Streptococcus pneumoniae (strain JJA) protein is GTPase Der.